A 158-amino-acid chain; its full sequence is Fibroblast growth factor 2 (158 aa).

The propeptide occupies M1–L12. N39 provides a ligand contact to heparin. The segment at K131–K147 is heparin-binding.

Belongs to the heparin-binding growth factors family.

Its subcellular location is the secreted. It localises to the nucleus. Functionally, acts as a ligand for FGFR1, FGFR2, FGFR3 and FGFR4. Also acts as an integrin ligand which is required for FGF2 signaling. Plays an important role in the regulation of cell survival, cell division, cell differentiation and cell migration. Functions as a potent mitogen in vitro. Can induce angiogenesis. In Gallus gallus (Chicken), this protein is Fibroblast growth factor 2 (FGF2).